A 441-amino-acid polypeptide reads, in one-letter code: Gluconate 2-dehydrogenase cytochrome c subunit (441 aa).

The signal sequence occupies residues 1-19; sequence MMKSILALVLGTLSFAALA. 3 Cytochrome c domains span residues 26–129, 173–289, and 312–403; these read ALVK…MHGV, PVLA…KSLG, and DDSQ…RGSW. 9 residues coordinate heme c: cysteine 40, cysteine 43, histidine 44, cysteine 188, cysteine 191, histidine 192, cysteine 325, cysteine 328, and histidine 329.

Heterotrimer. The cofactor is FAD. Post-translationally, binds 3 heme c groupd covalently per subunit.

It is found in the cell membrane. It catalyses the reaction D-gluconate + A = 2-dehydro-D-gluconate + AH2. In terms of biological role, part of the heterotrimer that catalyzes the conversion of D-gluconate to 2-dehydro-D-gluconate. The sequence is that of Gluconate 2-dehydrogenase cytochrome c subunit from Pantoea cypripedii (Pectobacterium cypripedii).